Consider the following 202-residue polypeptide: Type II restriction enzyme MunI (202 aa).

In terms of assembly, homodimer.

It carries out the reaction Endonucleolytic cleavage of DNA to give specific double-stranded fragments with terminal 5'-phosphates.. Its function is as follows. A P subtype restriction enzyme that recognizes the double-stranded sequence 5'-CAATTG-3' and cleaves after C-1. In Mycoplasma sp, this protein is Type II restriction enzyme MunI.